Consider the following 221-residue polypeptide: Small ribosomal subunit protein eS1 (221 aa).

The protein belongs to the eukaryotic ribosomal protein eS1 family.

This chain is Small ribosomal subunit protein eS1, found in Pyrobaculum aerophilum (strain ATCC 51768 / DSM 7523 / JCM 9630 / CIP 104966 / NBRC 100827 / IM2).